Here is a 770-residue protein sequence, read N- to C-terminus: Jhy protein (770 aa).

Disordered regions lie at residues Met-1–Tyr-249, Thr-295–Ser-438, His-493–Glu-527, Glu-595–Val-647, and Asp-708–Gly-740. Residues Ser-57–Glu-71 show a composition bias toward basic and acidic residues. Residues Pro-72 to Glu-85 show a composition bias toward acidic residues. Positions His-112 to Gly-134 are enriched in basic and acidic residues. Low complexity predominate over residues Ser-218–Ser-229. The span at Thr-295–His-314 shows a compositional bias: basic and acidic residues. The segment covering Arg-340–Arg-354 has biased composition (polar residues). The segment covering Arg-355–Gly-370 has biased composition (basic residues). Low complexity predominate over residues Gln-383–Gln-398. Positions Ala-410–Ser-438 are enriched in polar residues. Over residues His-493–Met-509 the composition is skewed to basic and acidic residues. 2 stretches are compositionally biased toward basic residues: residues Asn-510–Ala-521 and Gly-625–Tyr-642.

As to expression, expressed in the brain, specifically in hypothalamus, pineal gland, and ependymal cells of the aqueduct of Sylvius, as well as in the choroid plexus of the third ventricle. Expressed in the ependymal cells lining the lateral ventricles (at protein level).

Functionally, required for the normal development of cilia in brain ependymal cells lining the ventricular surfaces. The polypeptide is Jhy protein (Mus musculus (Mouse)).